The sequence spans 742 residues: Alcohol dehydrogenase (quinone), dehydrogenase subunit (742 aa).

The signal sequence occupies residues 1–35 (MTRPASAKRRSLLGILAAGTICAAALPYAAVPARA). Residue E96 coordinates pyrroloquinoline quinone. A disulfide bond links C142 and C143. R148 provides a ligand contact to pyrroloquinoline quinone. E216 contacts Ca(2+). T278 lines the pyrroloquinoline quinone pocket. N298 and D343 together coordinate Ca(2+). D343 (proton acceptor) is an active-site residue. Residues K370 and I584 each contribute to the pyrroloquinoline quinone site. Positions 636–715 (KVVDNGYFQY…AIRQYLIKRA (80 aa)) constitute a Cytochrome c domain. Heme c contacts are provided by C649, C652, H653, and M692. Positions 722–732 (EVDARKNDKNI) are enriched in basic and acidic residues. Residues 722–742 (EVDARKNDKNIPENPTLGINP) form a disordered region.

The protein belongs to the bacterial PQQ dehydrogenase family. The alcohol dehydrogenase multicomponent enzyme system is composed of a dehydrogenase subunit I (AdhA) and a cytochrome c subunit II (AdhB). Pyrroloquinoline quinone serves as cofactor. Requires Ca(2+) as cofactor. Heme c is required as a cofactor.

Its subcellular location is the cell membrane. The catalysed reaction is ethanol + a ubiquinone = a ubiquinol + acetaldehyde. Functionally, dehydrogenase component of the alcohol dehydrogenase multicomponent enzyme system which is involved in the production of acetic acid and in the ethanol oxidase respiratory chain. Quinohemoprotein alcohol dehydrogenase (ADH) catalyzes the oxidation of ethanol to acetaldehyde by transferring electrons to the ubiquinone embedded in the membrane phospholipids. The electrons transfer from ethanol to membranous ubiquinone occurs from pyrroloquinoline quinone (PQQ) to one heme c in subunit I (AdhA), and finally to two heme c in subunit II (AdhB). Besides ubiquinone reduction, ADH also has a ubiquinol (QH2) oxidation reaction which mediates electron transfer from ubiquinol to the non-energy generating bypass oxidase system. The electrons transfer occurs from ubiquinol (QH2) to the additional heme c within subunit II (AdhB). This is Alcohol dehydrogenase (quinone), dehydrogenase subunit from Acetobacter aceti.